Here is a 100-residue protein sequence, read N- to C-terminus: Integration host factor subunit alpha (100 aa).

This sequence belongs to the bacterial histone-like protein family. As to quaternary structure, heterodimer of an alpha and a beta chain.

This protein is one of the two subunits of integration host factor, a specific DNA-binding protein that functions in genetic recombination as well as in transcriptional and translational control. The chain is Integration host factor subunit alpha from Methylobacillus flagellatus (strain ATCC 51484 / DSM 6875 / VKM B-1610 / KT).